Reading from the N-terminus, the 337-residue chain is Phosphate acyltransferase (337 aa).

This sequence belongs to the PlsX family. As to quaternary structure, homodimer. Probably interacts with PlsY.

Its subcellular location is the cytoplasm. It carries out the reaction a fatty acyl-[ACP] + phosphate = an acyl phosphate + holo-[ACP]. It functions in the pathway lipid metabolism; phospholipid metabolism. Functionally, catalyzes the reversible formation of acyl-phosphate (acyl-PO(4)) from acyl-[acyl-carrier-protein] (acyl-ACP). This enzyme utilizes acyl-ACP as fatty acyl donor, but not acyl-CoA. The sequence is that of Phosphate acyltransferase from Aquifex aeolicus (strain VF5).